The chain runs to 402 residues: MADKILRAKRKQFINSVSIGTINGLLDELLEKRVLNQEEMDKIKLANITAMDKARDLCDHVSKKGPQASQIFITYICNEDCYLAGILELQSAPSAETFVATEDSKGGHPSSSETKEEQNKEDGTFPGLTGTLKFCPLEKAQKLWKENPSEIYPIMNTTTRTRLALIICNTEFQHLSPRVGAQVDLREMKLLLEDLGYTVKVKENLTALEMVKEVKEFAACPEHKTSDSTFLVFMSHGIQEGICGTTYSNEVSDILKVDTIFQMMNTLKCPSLKDKPKVIIIQACRGEKQGVVLLKDSVRDSEEDFLTDAIFEDDGIKKAHIEKDFIAFCSSTPDNVSWRHPVRGSLFIESLIKHMKEYAWSCDLEDIFRKVRFSFEQPEFRLQMPTADRVTLTKRFYLFPGH.

The 91-residue stretch at 1-91 (MADKILRAKR…YLAGILELQS (91 aa)) folds into the CARD domain. The propeptide occupies 1–118 (MADKILRAKR…PSSSETKEEQ (118 aa)). The tract at residues 98–125 (FVATEDSKGGHPSSSETKEEQNKEDGTF) is disordered. Residues 113-123 (ETKEEQNKEDG) show a composition bias toward basic and acidic residues. Active-site residues include His236 and Cys284. A propeptide spanning residues 297-314 (SVRDSEEDFLTDAIFEDD) is cleaved from the precursor. Residue Ser301 is modified to Phosphoserine. Arg343 carries the omega-N-methylarginine modification.

Belongs to the peptidase C14A family. Heterotetramer that consists of two anti-parallel arranged heterodimers, each one formed by a 20 kDa (Caspase-1 subunit p20) and a 10 kDa (Caspase-1 subunit p10) subunit. May be a component of the inflammasome, a protein complex which also includes PYCARD, CARD8 and NLRP2 and whose function would be the activation of pro-inflammatory caspases. Component of the AIM2 PANoptosome complex, a multiprotein complex that drives inflammatory cell death (PANoptosis). Both the p10 and p20 subunits interact with MEFV. Interacts with CARD17P/INCA and CARD18. Interacts with SERPINB1; this interaction regulates CASP1 activity. In terms of assembly, heterotetramer that consists of two anti-parallel arranged heterodimers, each one formed by a 20 kDa (Caspase-1 subunit p20) and a 10 kDa (Caspase-1 subunit p10) subunit. In terms of processing, the two subunits are derived from the precursor sequence by an autocatalytic mechanism. Ubiquitinated via 'Lys-11'-linked polyubiquitination. Deubiquitinated by USP8. High level expression seen in spleen and lung, low level expression seen in brain, heart, liver, kidney, testis and skeletal muscle.

Its subcellular location is the cytoplasm. The protein resides in the cell membrane. The catalysed reaction is Strict requirement for an Asp residue at position P1 and has a preferred cleavage sequence of Tyr-Val-Ala-Asp-|-.. Functionally, thiol protease involved in a variety of inflammatory processes by proteolytically cleaving other proteins, such as the precursors of the inflammatory cytokines interleukin-1 beta (IL1B) and interleukin 18 (IL18) as well as the pyroptosis inducer Gasdermin-D (GSDMD), into active mature peptides. Plays a key role in cell immunity as an inflammatory response initiator: once activated through formation of an inflammasome complex, it initiates a pro-inflammatory response through the cleavage of the two inflammatory cytokines IL1B and IL18, releasing the mature cytokines which are involved in a variety of inflammatory processes. Cleaves a tetrapeptide after an Asp residue at position P1. Also initiates pyroptosis, a programmed lytic cell death pathway, through cleavage of GSDMD. In contrast to cleavage of interleukin IL1B, recognition and cleavage of GSDMD is not strictly dependent on the consensus cleavage site but depends on an exosite interface on CASP1 that recognizes and binds the Gasdermin-D, C-terminal (GSDMD-CT) part. Cleaves and activates CASP7 in response to bacterial infection, promoting plasma membrane repair. Upon inflammasome activation, during DNA virus infection but not RNA virus challenge, controls antiviral immunity through the cleavage of CGAS, rendering it inactive. In apoptotic cells, cleaves SPHK2 which is released from cells and remains enzymatically active extracellularly. The sequence is that of Caspase-1 (Casp1) from Mus musculus (Mouse).